A 354-amino-acid chain; its full sequence is N-acylethanolamine-hydrolyzing acid amidase (354 aa).

An N-terminal signal peptide occupies residues 1 to 22 (MRSPGIVLLLLLLLLLPPGAAP). 2 N-linked (GlcNAc...) asparagine glycosylation sites follow: Asn35 and Asn104. Cys123 (nucleophile) is an active-site residue. 3 N-linked (GlcNAc...) asparagine glycosylation sites follow: Asn306, Asn312, and Asn352.

The protein belongs to the acid ceramidase family. As to quaternary structure, heterodimer of an alpha and a beta subunit, produced by autocatalytic cleavage. In terms of processing, N-glycosylated. Tunicamycin treatment causes a reduction in specific activity against N-palmitoylethanolamine. Post-translationally, autoproteolytic cleavage at pH 4.5 gives rise to the alpha and beta subunit. Cleavage gives rise to a conformation change that activates the enzyme. The same catalytic Cys residue mediates the autoproteolytic cleavage and subsequent hydrolysis of lipid substrates.

Its subcellular location is the lysosome. The protein resides in the membrane. It carries out the reaction N-hexadecanoylethanolamine + H2O = ethanolamine + hexadecanoate. The enzyme catalyses an N-(long-chain fatty acyl)ethanolamine + H2O = a long-chain fatty acid + ethanolamine. It catalyses the reaction N-dodecanoylethanolamine + H2O = dodecanoate + ethanolamine. The catalysed reaction is N-tetradecanoylethanolamine + H2O = tetradecanoate + ethanolamine. It carries out the reaction an N-acylsphing-4-enine + H2O = sphing-4-enine + a fatty acid. The enzyme catalyses N-hexadecanoylsphing-4-enine + H2O = sphing-4-enine + hexadecanoate. It catalyses the reaction N-dodecanoylsphing-4-enine + H2O = dodecanoate + sphing-4-enine. Its pathway is lipid metabolism; fatty acid metabolism. Degrades bioactive fatty acid amides to their corresponding acids, with the following preference: N-palmitoylethanolamine &gt; N-myristoylethanolamine &gt; N-stearoylethanolamine &gt; N-oleoylethanolamine &gt; N-linoleoylethanolamine &gt; N-arachidonoylethanolamine. This is N-acylethanolamine-hydrolyzing acid amidase from Cavia porcellus (Guinea pig).